The following is a 578-amino-acid chain: Octopamine receptor 2 (578 aa).

At 1–84 (MMSFPIALFA…YDSITIFITV (84 aa)) the chain is on the extracellular side. 4 N-linked (GlcNAc...) asparagine glycosylation sites follow: asparagine 13, asparagine 38, asparagine 46, and asparagine 59. Residues 85–107 (AVVLTLITLWTILGNFFVLMALY) form a helical membrane-spanning segment. Residues 108–117 (RYGTLRTMSN) lie on the Cytoplasmic side of the membrane. A helical membrane pass occupies residues 118-139 (CLIGNLAISDLLLAVTVLPIST). Residues 140–156 (VHDLLGYWVFGEFTCTL) lie on the Extracellular side of the membrane. A disulfide bond links cysteine 154 and cysteine 239. Residues 157 to 177 (WLCMDVLYCTASIWGLCTVAF) form a helical membrane-spanning segment. Topologically, residues 178 to 197 (DRYLATVYPVWYHDQRSVRK) are cytoplasmic. A helical membrane pass occupies residues 198–220 (AVGCIVFVWIFSIVISFAPFIGW). Topologically, residues 221-251 (QHMIPSFFSFNASIQRYQCILFTSSSYVLYS) are extracellular. N-linked (GlcNAc...) asparagine glycosylation is present at asparagine 231. Residues 252–272 (SMGSFVIPAILMAFMYVRIFV) form a helical membrane-spanning segment. Topologically, residues 273 to 495 (VLHNQSRGVK…ELREQRATKR (223 aa)) are cytoplasmic. A helical transmembrane segment spans residues 496 to 517 (MLLIMACFCVCWMPFLFMYILR). The Extracellular portion of the chain corresponds to 518-531 (SVCDTCHMNQHFVA). Residues 532-553 (AIIWLGYVNSSLNPVLYTLFND) form a helical membrane-spanning segment. Residues 554–578 (DFKVAFKRLIGARSPSAYRSPGPRR) are Cytoplasmic-facing.

It belongs to the G-protein coupled receptor 1 family.

The protein localises to the cell membrane. Receptor for octopamine. Octopamine (OA) is a neurotransmitter, neurohormone, and neuromodulator in invertebrates. This receptor induces a long lasting opening of voltage- independent chloride channels, a process which seems to involve protein phosphorylation but does not require either cAPK or PKC. The rank order of potency for agonists is p-synephrine &gt; p-octopamine &gt; xylometazoline &gt; B-HT920 &gt; norepinephrine = clonidine &gt; epinephrine &gt; p-tyramine &gt; phenylephrine = oxymetazoline = mehoxamine = dopamine &gt; serotonin &gt; histamine. For antagonists, the rank order is rauwolscine = mianserin &gt; phentolamine &gt; chlorpromazine &gt; spiperone &gt; yohimbine &gt; propanolol &gt; alprenolol &gt; prazosine &gt; pindolol. This is Octopamine receptor 2 from Lymnaea stagnalis (Great pond snail).